A 292-amino-acid polypeptide reads, in one-letter code: Homoserine kinase (292 aa).

80–90 provides a ligand contact to ATP; sequence PLARGLGSSSS.

The protein belongs to the GHMP kinase family. Homoserine kinase subfamily.

It localises to the cytoplasm. It catalyses the reaction L-homoserine + ATP = O-phospho-L-homoserine + ADP + H(+). It functions in the pathway amino-acid biosynthesis; L-threonine biosynthesis; L-threonine from L-aspartate: step 4/5. Catalyzes the ATP-dependent phosphorylation of L-homoserine to L-homoserine phosphate. This is Homoserine kinase from Leuconostoc mesenteroides subsp. mesenteroides (strain ATCC 8293 / DSM 20343 / BCRC 11652 / CCM 1803 / JCM 6124 / NCDO 523 / NBRC 100496 / NCIMB 8023 / NCTC 12954 / NRRL B-1118 / 37Y).